The following is a 225-amino-acid chain: Ribonuclease 3 (225 aa).

The RNase III domain occupies Ile-5 to Asp-127. Glu-40 contacts Mg(2+). Asp-44 is a catalytic residue. Mg(2+)-binding residues include Asp-113 and Glu-116. The active site involves Glu-116. One can recognise a DRBM domain in the interval Asp-154–Asn-224.

It belongs to the ribonuclease III family. Homodimer. Mg(2+) serves as cofactor.

Its subcellular location is the cytoplasm. It carries out the reaction Endonucleolytic cleavage to 5'-phosphomonoester.. Its function is as follows. Digests double-stranded RNA. Involved in the processing of primary rRNA transcript to yield the immediate precursors to the large and small rRNAs (23S and 16S). Processes some mRNAs, and tRNAs when they are encoded in the rRNA operon. Processes pre-crRNA and tracrRNA of type II CRISPR loci if present in the organism. The chain is Ribonuclease 3 from Vibrio vulnificus (strain CMCP6).